The chain runs to 309 residues: Probable nitrogen assimilation transcriptional activator (309 aa).

An HTH lysR-type domain is found at 1–57 (MRLEQLQAALRVAETGSFQEAAQKVGCNQSTISRQVKGLEDELGIALFRRQGRMKLT). Residues 18-37 (FQEAAQKVGCNQSTISRQVK) constitute a DNA-binding region (H-T-H motif).

Belongs to the LysR transcriptional regulatory family.

Its function is as follows. Seems to regulate utilization of fixed nitrogen by controlling the expression of a certain gene(s) involved in nitrogen metabolism. This Synechococcus elongatus (strain ATCC 33912 / PCC 7942 / FACHB-805) (Anacystis nidulans R2) protein is Probable nitrogen assimilation transcriptional activator (ntcB).